Consider the following 439-residue polypeptide: MGHSAVLLCVALAILPACVTGAPVQRQHKLLLVSFDGFRWNYDQDVDTPNLDSMAQEGVKAQYMTPAFVTMTSPCHFTLVTGKYIENHGVVHNMFYNTTSTVRLPYHATLGIQRWWDNGSIPIWITAQRQGLKTGSFFYPGGNVTYQGEAVTMSRKEGVLHNYKNETEWRGNVDTVMKWFLEEDVSLVTLYFGEPDSTGHKYGPESQERKDMVKQVDRTVGYLRDSIKRHHLSDSLNLIITSDHGMTTVNKKASDLVEFHKFSNFTFQDIQFELLDYGPIGMLIPKEGMLEKVYSVLKDAHPRLHVYKKEDFPKNFHYANNPRITPLLMYSDLGYVIHGRVNVQFNNGEHGFNNQDMDMKTIFRAVGPSFKAGLEVEPFESVHVYELMCQLLGIVPEPNDGNPGILRPMLRSGSASLLSSQHHLVALLVGILTCLAKVL.

Positions 1–21 (MGHSAVLLCVALAILPACVTG) are cleaved as a signal peptide. At 22–414 (APVQRQHKLL…ILRPMLRSGS (393 aa)) the chain is on the extracellular side. Zn(2+) contacts are provided by aspartate 36 and threonine 72. A required for enzyme activity region spans residues 69 to 75 (VTMTSPC). The active-site Nucleophile is the threonine 72. A substrate-binding site is contributed by asparagine 93. 4 N-linked (GlcNAc...) asparagine glycosylation sites follow: asparagine 97, asparagine 118, asparagine 143, and asparagine 165. Residues aspartate 196, histidine 200, aspartate 243, and histidine 244 each contribute to the Zn(2+) site. Asparagine 264 carries an N-linked (GlcNAc...) asparagine glycan. A Zn(2+)-binding site is contributed by histidine 350. A helical transmembrane segment spans residues 415–435 (ASLLSSQHHLVALLVGILTCL). Over 436–439 (AKVL) the chain is Cytoplasmic.

Zn(2+) serves as cofactor. Post-translationally, N-glycosylated; required for activity and transport to the plasma membrane. Expressed in liver and small intestine.

It localises to the cell membrane. It catalyses the reaction a sphingomyelin + H2O = phosphocholine + an N-acylsphing-4-enine + H(+). The catalysed reaction is a 1-O-alkyl-2-acetyl-sn-glycero-3-phosphocholine + H2O = a 1-O-alkyl-2-acetyl-sn-glycerol + phosphocholine + H(+). The enzyme catalyses 1-O-octadecyl-2-acetyl-sn-glycero-3-phosphocholine + H2O = 1-O-octadecyl-2-acetyl-sn-glycerol + phosphocholine + H(+). It carries out the reaction 1-hexadecanoyl-sn-glycero-3-phosphocholine + H2O = 1-hexadecanoyl-sn-glycerol + phosphocholine + H(+). In terms of biological role, choline-specific phosphodiesterase that hydrolyzes sphingomyelin releasing the ceramide and phosphocholine and therefore is involved in sphingomyelin digestion, ceramide formation, and fatty acid (FA) absorption in the gastrointestinal tract. Also has phospholipase C activity and can also cleave phosphocholine from palmitoyl lyso-phosphatidylcholine and platelet-activating factor (PAF) leading to its inactivation. Does not have nucleotide pyrophosphatase activity. May promote cholesterol absorption by affecting the levels of sphingomyelin derived from either diet or endogenous sources, in the intestinal lumen. The chain is Ectonucleotide pyrophosphatase/phosphodiesterase family member 7 from Mus musculus (Mouse).